The chain runs to 198 residues: MIEFVYPHTQLVAGVDEVGRGPLVGAVVTAAVILDPARPIAGLNDSKKLSEKRRLALCEEIKEKALSWSLGRAEPHEIDELNILHATMLAMQRAVAGLHIAPEYVLIDGNRCPKLPMPAMAVVKGDSRVPEISAASILAKVTRDAEMAALDIVFPQYGFAQHKGYPTAFHLEKLAEYGATEHHRRSFGPVKRALGLAS.

In terms of domain architecture, RNase H type-2 spans 10–198 (QLVAGVDEVG…PVKRALGLAS (189 aa)). A divalent metal cation-binding residues include aspartate 16, glutamate 17, and aspartate 108.

This sequence belongs to the RNase HII family. Requires Mn(2+) as cofactor. Mg(2+) is required as a cofactor.

It is found in the cytoplasm. It carries out the reaction Endonucleolytic cleavage to 5'-phosphomonoester.. Functionally, endonuclease that specifically degrades the RNA of RNA-DNA hybrids. The protein is Ribonuclease HII of Escherichia fergusonii (strain ATCC 35469 / DSM 13698 / CCUG 18766 / IAM 14443 / JCM 21226 / LMG 7866 / NBRC 102419 / NCTC 12128 / CDC 0568-73).